The sequence spans 419 residues: Phospho-N-acetylmuramoyl-pentapeptide-transferase (419 aa).

The next 10 membrane-spanning stretches (helical) occupy residues 22 to 42, 72 to 92, 94 to 114, 135 to 155, 210 to 230, 238 to 258, 266 to 286, 303 to 323, 327 to 347, and 396 to 416; these read YVSFRSGLALILSLFISTAIG, TPTMGGIIIIIAILIPTLLCA, LNNIYVILMLVTTVWLGALGF, IVGQVGLGLIVGLVLFMSPDV, AAWLVFVLMVIFVVTAVSNGA, GLAAGTSAIIGVALGILAYMS, FLNIMFIPGAEELVVYAAAFI, FMGDTGSLTLGGIIAVFAIII, LLIPILCGIFLVENISVMLQV, and KIVVRFWLIGIILAVMTIVTL.

This sequence belongs to the glycosyltransferase 4 family. MraY subfamily. The cofactor is Mg(2+).

It localises to the cell inner membrane. It catalyses the reaction UDP-N-acetyl-alpha-D-muramoyl-L-alanyl-gamma-D-glutamyl-meso-2,6-diaminopimeloyl-D-alanyl-D-alanine + di-trans,octa-cis-undecaprenyl phosphate = di-trans,octa-cis-undecaprenyl diphospho-N-acetyl-alpha-D-muramoyl-L-alanyl-D-glutamyl-meso-2,6-diaminopimeloyl-D-alanyl-D-alanine + UMP. It functions in the pathway cell wall biogenesis; peptidoglycan biosynthesis. In terms of biological role, catalyzes the initial step of the lipid cycle reactions in the biosynthesis of the cell wall peptidoglycan: transfers peptidoglycan precursor phospho-MurNAc-pentapeptide from UDP-MurNAc-pentapeptide onto the lipid carrier undecaprenyl phosphate, yielding undecaprenyl-pyrophosphoryl-MurNAc-pentapeptide, known as lipid I. The protein is Phospho-N-acetylmuramoyl-pentapeptide-transferase of Parabacteroides distasonis (strain ATCC 8503 / DSM 20701 / CIP 104284 / JCM 5825 / NCTC 11152).